Consider the following 50-residue polypeptide: MNPFFYFVQLFFYYPFFIIFLYIYLVFFIPKTNNINFSNIFPLFSKWIKK.

A helical transmembrane segment spans residues 10–29; the sequence is LFFYYPFFIIFLYIYLVFFI.

Its subcellular location is the plastid. It localises to the chloroplast membrane. This is an uncharacterized protein from Marchantia polymorpha (Common liverwort).